We begin with the raw amino-acid sequence, 212 residues long: Large ribosomal subunit protein uL3 (212 aa).

Residues R128–T146 are compositionally biased toward basic residues. The segment at R128–P164 is disordered.

This sequence belongs to the universal ribosomal protein uL3 family. As to quaternary structure, part of the 50S ribosomal subunit. Forms a cluster with proteins L14 and L19.

Functionally, one of the primary rRNA binding proteins, it binds directly near the 3'-end of the 23S rRNA, where it nucleates assembly of the 50S subunit. The protein is Large ribosomal subunit protein uL3 of Desulfitobacterium hafniense (strain Y51).